The following is a 255-amino-acid chain: MTLTIKEVTQLINAVNTIEELENHECFLDERKGVQNAIARRRKALEKEQALKEKYVEMTYFENEILKEHPNAIICGIDEVGRGPLAGPVVACATILNSNHNYLGLDDSKKVPVTKRLELNEALKNEVTAFAYGIATAEEIDEFNIYKATQIAMQRAIDGLSVQPTHLLIDAMTLDNALPQVSLIKGDARSVSIAAASIMAKVFRDDYMTQLSKDYPEYGFEKNAGYGTKQHLLAIDDIGIMKEHRKSFEPIKSLL.

The region spanning 72-255 (AIICGIDEVG…KSFEPIKSLL (184 aa)) is the RNase H type-2 domain. 3 residues coordinate a divalent metal cation: D78, E79, and D170.

The protein belongs to the RNase HII family. Mn(2+) is required as a cofactor. It depends on Mg(2+) as a cofactor.

Its subcellular location is the cytoplasm. The catalysed reaction is Endonucleolytic cleavage to 5'-phosphomonoester.. In terms of biological role, endonuclease that specifically degrades the RNA of RNA-DNA hybrids. This chain is Ribonuclease HII, found in Staphylococcus aureus (strain USA300).